We begin with the raw amino-acid sequence, 1114 residues long: OTU domain-containing protein 4 (1114 aa).

M1 carries the N-acetylmethionine modification. Residues 1 to 22 form a disordered region; it reads MEAAVGVPDGGDQGGAGPREDA. Positions 8 to 17 are enriched in gly residues; the sequence is PDGGDQGGAG. The OTU domain maps to 34–155; the sequence is LYRKLVAKDG…GNHYDIVYPI (122 aa). The cys-loop stretch occupies residues 39–45; sequence VAKDGSC. D42 is a catalytic residue. The active-site Nucleophile is the C45. The interval 94–104 is variable-loop; sequence LENPQEWVGQV. The residue at position 120 (Y120) is a Phosphotyrosine. Phosphoserine occurs at positions 126 and 128. Phosphothreonine is present on T131. The tract at residues 143-148 is his-loop; that stretch reads FSNGNH. The active site involves H148. A phosphoserine mark is found at S166, S199, S202, S204, and S341. Residues 323-449 form a disordered region; the sequence is KHTSKNLKAP…FGLSPEERRE (127 aa). Residues 392 to 404 show a composition bias toward low complexity; the sequence is FSSHSSGSQSQKF. The span at 420 to 435 shows a compositional bias: basic and acidic residues; it reads RKPDRERVEDFDHTSR. Y439 is modified (phosphotyrosine). Residue S443 is modified to Phosphoserine. Y460 bears the Phosphotyrosine mark. The disordered stretch occupies residues 472–567; sequence ALSSSSVNQS…PAEQKPAEHV (96 aa). Positions 474-487 are enriched in low complexity; it reads SSSSVNQSASQSSN. Residues 496-529 show a composition bias toward basic and acidic residues; that stretch reads HVGDRKGSRRRMDTEERKDKDSIHGHSQLDKRPE. Residues S546, S893, and S900 each carry the phosphoserine modification. Positions 911-1114 are disordered; it reads EFPEARGEHV…MGDGHRGQHT (204 aa). Basic and acidic residues-rich tracts occupy residues 913–922 and 969–1000; these read PEARGEHVHS and NRERETVPVELEPKRTIQSLKEKTEKVKDPKT. Phosphoserine occurs at positions 1006, 1011, 1014, 1023, and 1024. Residues 1039-1048 are compositionally biased toward polar residues; it reads SKQFYNQTYG. Position 1049 is a phosphoserine (S1049). 2 stretches are compositionally biased toward basic and acidic residues: residues 1067-1086 and 1096-1114; these read VRSEESWKGQPSRSRDEGYQ and FRGDRRRSGMGDGHRGQHT.

As to quaternary structure, interacts with MYD88; the interaction is direct. Interacts with ALKBH3; the interaction is direct. Interacts with USP7; the interaction is direct. Interacts with USP9X; the interaction is direct. In terms of processing, phosphorylated on Ser-202 and Ser-204 likely by CSNK2A1-CSNK2A2 serine/threonine-protein kinase complex. Activates 'Lys-63'-specific deubiquitinase activity.

The protein resides in the cytoplasm. It is found in the nucleus. It catalyses the reaction Thiol-dependent hydrolysis of ester, thioester, amide, peptide and isopeptide bonds formed by the C-terminal Gly of ubiquitin (a 76-residue protein attached to proteins as an intracellular targeting signal).. With respect to regulation, phosphorylation on Ser-202 and Ser-204 induces 'Lys-63'-specific deubiquitinase activity. Its function is as follows. Deubiquitinase which hydrolyzes the isopeptide bond between the ubiquitin C-terminus and the lysine epsilon-amino group of the target protein. May negatively regulate inflammatory and pathogen recognition signaling in innate immune response. Upon phosphorylation at Ser-202 and Ser-204 residues, via IL-1 receptor and Toll-like receptor signaling pathway, specifically deubiquitinates 'Lys-63'-polyubiquitinated MYD88 adapter protein triggering down-regulation of NF-kappa-B-dependent transcription of inflammatory mediators. Independently of the catalytic activity, acts as a scaffold for alternative deubiquitinases to assemble specific deubiquitinase-substrate complexes. Associates with USP7 and USP9X deubiquitinases to stabilize alkylation repair enzyme ALKBH3, thereby promoting the repair of alkylated DNA lesions. The chain is OTU domain-containing protein 4 from Homo sapiens (Human).